The sequence spans 685 residues: Nucleolar protein 4 (685 aa).

Residues 1–21 are disordered; the sequence is MEETIENVEVPSSNVSKQNDD. Positions 26–103 constitute an RRM 1 domain; that stretch reads KTLFVRSIPQ…HILRVDIAKR (78 aa). Residues 106–123 are compositionally biased toward basic and acidic residues; sequence RSKKTSEVVEKSTPESSE. A disordered region spans residues 106–142; that stretch reads RSKKTSEVVEKSTPESSEKITGQNNEDEDDADGEDSM. The segment covering 130–140 has biased composition (acidic residues); it reads NEDEDDADGED. An RRM 2 domain is found at 147-225; sequence PKLIIRNMPW…RKVAVDFAVQ (79 aa). Residues 231–242 show a composition bias toward basic and acidic residues; sequence DYKKAQPEMNDK. Positions 231 to 285 are disordered; sequence DYKKAQPEMNDKDDNESGNEDAEENHDDEEDENEEEDRQVDQASKNKESKRKAQN. Residues 243–268 show a composition bias toward acidic residues; sequence DDNESGNEDAEENHDDEEDENEEEDR. Ser-247 bears the Phosphoserine mark. RRM domains are found at residues 290–383 and 462–612; these read FSVF…PTLV and TRLA…FAIE. The residue at position 379 (Thr-379) is a Phosphothreonine. Residues 622–631 show a composition bias toward basic residues; it reads EQLKQARTKR. Positions 622–685 are disordered; the sequence is EQLKQARTKR…FKRKRKHAKK (64 aa). The span at 645–672 shows a compositional bias: basic and acidic residues; that stretch reads SENKKPKKEEATTPTNPDDKKMGDDIKR. Positions 674-685 are enriched in basic residues; the sequence is IGFKRKRKHAKK.

In terms of assembly, interacts with NOP1.

The protein resides in the nucleus. Its subcellular location is the nucleolus. Functionally, required for 60S ribosomal subunit synthesis. Probably involved in the processing of 27S rRNA to produce mature 25S rRNA. This is Nucleolar protein 4 (NOP4) from Saccharomyces cerevisiae (strain ATCC 204508 / S288c) (Baker's yeast).